Here is a 512-residue protein sequence, read N- to C-terminus: Allene oxide synthase 1, chloroplastic (512 aa).

The transit peptide at 1–25 directs the protein to the chloroplast; sequence MATAAACISFASPSPARVVIRRQTR. The tract at residues 23 to 43 is disordered; sequence QTRASASASATDRQEVVSPKR. Heme b is bound by residues Lys-127, His-158, and Lys-162. Asn-315 is a (13S)-hydroperoxy-(9Z,11E,15Z)-octadecatrienoate binding site. The heme b site is built by Lys-463 and Cys-465.

The protein belongs to the cytochrome P450 family. Heme b is required as a cofactor. As to expression, expressed in coleoptiles, and at lower level in leaves of dark-grown seedlings.

The protein resides in the plastid. It localises to the chloroplast membrane. It carries out the reaction (13S)-hydroperoxy-(9Z,11E,15Z)-octadecatrienoate = (9Z,13S,15Z)-12,13-epoxyoctadeca-9,11,15-trienoate + H2O. It participates in lipid metabolism; oxylipin biosynthesis. Involved in the biosynthesis of jasmonic acid, a growth regulator that is implicated also as a signaling molecule in plant defense. Converts 13-hydroperoxylinolenic acid to 12,13-epoxylinolenic acid. The sequence is that of Allene oxide synthase 1, chloroplastic (CYP74A1) from Oryza sativa subsp. japonica (Rice).